The primary structure comprises 776 residues: Microtubule-associated protein tau (776 aa).

Positions 1–26 (MAEPRQEFEVMEDHAGTYGLGDRKDQ) are enriched in basic and acidic residues. Disordered stretches follow at residues 1-263 (MAEP…PAKG) and 276-591 (STEI…LKNV). Ala2 is modified (N-acetylalanine). 2 positions are modified to phosphotyrosine: Tyr18 and Tyr29. Residue Lys44 forms a Glycyl lysine isopeptide (Lys-Gly) (interchain with G-Cter in ubiquitin) linkage. 2 positions are modified to phosphoserine: Ser46 and Ser61. A compositionally biased stretch (polar residues) spans 61–71 (SETSDAKSTPT). Residues Thr69, Thr71, and Thr111 each carry the phosphothreonine modification. 2 stretches are compositionally biased toward basic and acidic residues: residues 179-189 (EGGRHAPELLK) and 207-216 (GGKERPGSKE). Ser214 is subject to Phosphoserine. A compositionally biased stretch (acidic residues) spans 217-228 (EVDEDRDVDESS). Residues 314 to 323 (EQAHSEEHLG) are compositionally biased toward basic and acidic residues. Residues 324–340 (RAAFPGAPGEGPEARGP) show a composition bias toward low complexity. Basic and acidic residues-rich tracts occupy residues 344–356 (EDTKEADLPESSE) and 381–393 (KSKDGTGSDDKKA). Over residues 440-452 (KYVSSVTPRTGSS) the composition is skewed to polar residues. Residues 455–466 (KEMKLKGADGKT) are compositionally biased toward basic and acidic residues. Thr470 is subject to Phosphothreonine. Omega-N-methylarginine is present on Arg472. An N6,N6-dimethyllysine; alternate modification is found at Lys480. Lys480 is modified (N6-acetyllysine; alternate). Thr486, Thr492, and Thr498 each carry phosphothreonine. Phosphoserine occurs at positions 502, 526, and 530. A compositionally biased stretch (basic and acidic residues) spans 517-528 (RSERGEPPKSGD). A compositionally biased stretch (low complexity) spans 529 to 549 (RSGYSSPGSPGTPGSRSRTPS). A Phosphotyrosine modification is found at Tyr532. Phosphoserine occurs at positions 533, 534, and 537. Thr540 and Thr547 each carry phosphothreonine. Ser549 is modified (phosphoserine). Position 552 is a phosphothreonine (Thr552). Lys560 carries the post-translational modification N6-acetyllysine. Phosphothreonine is present on Thr566. 2 positions are modified to phosphoserine: Ser570 and Ser572. 4 Tau/MAP repeats span residues 579 to 609 (QTAPVPMPDLKNVKSKIGSTENLKHQPGGGK), 610 to 640 (VQIINKKLDLSNVQSKCGSKDNIKHVPGGGS), 641 to 671 (VQIVYKPVDLSKVTSKCGSLGNIHHKPGGGQ), and 672 to 703 (VEVKSEKLDFKDRVQSKIGSLDNITHVPGGGN). A Glycyl lysine isopeptide (Lys-Gly) (interchain with G-Cter in ubiquitin) cross-link involves residue Lys589. Lys594 bears the N6-acetyllysine; alternate mark. Lys594 carries the N6-methyllysine; alternate modification. Lys594 is covalently cross-linked (Glycyl lysine isopeptide (Lys-Gly) (interchain with G-Cter in ubiquitin); alternate). A Phosphoserine modification is found at Ser597. Residue Lys602 forms a Glycyl lysine isopeptide (Lys-Gly) (interchain with G-Cter in ubiquitin) linkage. Lys616 carries the post-translational modification N6-acetyllysine; alternate. Lys616 is covalently cross-linked (Glycyl lysine isopeptide (Lys-Gly) (interchain with G-Cter in ubiquitin); alternate). 2 positions are modified to phosphoserine: Ser620 and Ser624. The residue at position 625 (Lys625) is an N6-acetyllysine. Ser628 is modified (phosphoserine). Lys633 carries the N6-acetyllysine; alternate modification. A Glycyl lysine isopeptide (Lys-Gly) (interchain with G-Cter in ubiquitin); alternate cross-link involves residue Lys633. Position 640 is a phosphoserine (Ser640). An N6,N6-dimethyllysine; alternate modification is found at Lys646. 3 positions are modified to N6-acetyllysine; alternate: Lys646, Lys652, and Lys656. Residues Lys646, Lys652, and Lys656 each participate in a glycyl lysine isopeptide (Lys-Gly) (interchain with G-Cter in ubiquitin); alternate cross-link. Ser659 is modified (phosphoserine). An N6-acetyllysine; alternate mark is found at Lys666, Lys678, and Lys682. Residues Lys666, Lys678, and Lys682 each participate in a glycyl lysine isopeptide (Lys-Gly) (interchain with G-Cter in ubiquitin); alternate cross-link. Residue Arg684 is modified to Omega-N-methylarginine. At Ser687 the chain carries Phosphoserine. Residue Lys688 forms a Glycyl lysine isopeptide (Lys-Gly) (interchain with G-Cter in ubiquitin) linkage. Ser691 is modified (phosphoserine). An N6-acetyllysine; alternate modification is found at Lys704. A Glycyl lysine isopeptide (Lys-Gly) (interchain with G-Cter in ubiquitin); alternate cross-link involves residue Lys704. Lys710 participates in a covalent cross-link: Glycyl lysine isopeptide (Lys-Gly) (interchain with G-Cter in ubiquitin). Lys720 carries the N6-acetyllysine; alternate modification. A Glycyl lysine isopeptide (Lys-Gly) (interchain with G-Cter in ubiquitin); alternate cross-link involves residue Lys720. Position 729 is a phosphotyrosine (Tyr729). Ser731 and Ser735 each carry phosphoserine. The tract at residues 733–752 (VVSGDTSPRHLSNVSSTGSI) is disordered. The span at 736-751 (GDTSPRHLSNVSSTGS) shows a compositional bias: polar residues. Thr738 is subject to Phosphothreonine. Phosphoserine is present on residues Ser739, Ser744, Ser751, and Ser757. The residue at position 762 (Thr762) is a Phosphothreonine.

As to quaternary structure, interacts with MARK1, MARK2, MARK3 and MARK4. Interacts with SQSTM1 when polyubiquitinated. Interacts with PSMC2 through SQSTM1. Interacts with FKBP4. Binds to CSNK1D. Interacts with SGK1. Interacts with EPM2A; the interaction dephosphorylates MAPT at Ser-396. Interacts with PIN1. Interacts with LRRK2. Interacts with LRP1, leading to endocytosis; this interaction is reduced in the presence of LRPAP1/RAP. In terms of processing, polyubiquitinated. Requires functional TRAF6 and may provoke SQSTM1-dependent degradation by the proteasome. Post-translationally, phosphorylation at various serine and threonine residues in S-P or T-P motifs by proline-directed protein kinases (PDPK1, CDK1, CDK5, GSK3, MAPK) (a few sites per protein in interphase, more in mitosis), and at serine residues in K-X-G-S motifs by MAP/microtubule affinity-regulating kinase (MARK1, MARK2, MARK3 or MARK4), causing detachment from microtubules, and their disassembly. Phosphorylation at Ser-597 by BRSK1 and BRSK2 in neurons affects ability to bind microtubules and plays a role in neuron polarization. Phosphorylation at Ser-214 by SGK1 mediates microtubule depolymerization and neurite formation in hippocampal neurons. Phosphorylated by PHK. Dephosphorylation at several serine and threonine residues by the serine/threonine phosphatase PPP5C.

The protein resides in the cytoplasm. It is found in the cytosol. It localises to the cell membrane. The protein localises to the cytoskeleton. Its subcellular location is the cell projection. The protein resides in the axon. It is found in the dendrite. Promotes microtubule assembly and stability, and might be involved in the establishment and maintenance of neuronal polarity. The C-terminus binds axonal microtubules while the N-terminus binds neural plasma membrane components, suggesting that tau functions as a linker protein between both. Axonal polarity is predetermined by tau localization (in the neuronal cell) in the domain of the cell body defined by the centrosome. The short isoforms allow plasticity of the cytoskeleton whereas the longer isoforms may preferentially play a role in its stabilization. The protein is Microtubule-associated protein tau (MAPT) of Gorilla gorilla gorilla (Western lowland gorilla).